We begin with the raw amino-acid sequence, 1670 residues long: Hemolymph clottable protein (1670 aa).

A signal peptide spans 1–14 (MKALILLLLGACQA). The vittelogenin stretch occupies residues 15 to 674 (LQPGLEYQYR…FANFVTTTIY (660 aa)). The Vitellogenin domain maps to 15–764 (LQPGLEYQYR…LKIDGQQRGL (750 aa)). Residue asparagine 106 is glycosylated (N-linked (GlcNAc...) asparagine). Positions 198 to 231 (SSYTTKTKSKTSSKTSSKTSSKTSSKTSKTGKTS) are enriched in low complexity. Positions 198–236 (SSYTTKTKSKTSSKTSSKTSSKTSSKTSKTGKTSPGQLA) are disordered. N-linked (GlcNAc...) asparagine glycans are attached at residues asparagine 319, asparagine 459, and asparagine 1301. Residues 1390-1550 (VSCTIDETKV…SWASPGEGCA (161 aa)) enclose the VWFD domain. 2 disulfides stabilise this stretch: cysteine 1392–cysteine 1513 and cysteine 1414–cysteine 1549.

Homodimer; disulfide-linked. Also exists as oligomers. In terms of processing, glycosylated. Contains mannose and N-acetylglucosamine. Post-translationally, substrate of transglutaminase. In terms of tissue distribution, widely expressed with highest levels in gill and heart. Not expressed in hemocytes.

It localises to the secreted. Its function is as follows. Forms stable clots in the presence of calcium. This Penaeus monodon (Giant tiger prawn) protein is Hemolymph clottable protein.